A 134-amino-acid polypeptide reads, in one-letter code: Small ribosomal subunit protein uS11 (134 aa).

The protein belongs to the universal ribosomal protein uS11 family. In terms of assembly, part of the 30S ribosomal subunit. Interacts with proteins S7 and S18. Binds to IF-3.

Functionally, located on the platform of the 30S subunit, it bridges several disparate RNA helices of the 16S rRNA. Forms part of the Shine-Dalgarno cleft in the 70S ribosome. The protein is Small ribosomal subunit protein uS11 of Janthinobacterium sp. (strain Marseille) (Minibacterium massiliensis).